The sequence spans 753 residues: 5-methyltetrahydropteroyltriglutamate--homocysteine methyltransferase (753 aa).

Residues R17–K20 and K117 each bind 5-methyltetrahydropteroyltri-L-glutamate. Residues I431–S433 and E484 contribute to the L-homocysteine site. L-methionine is bound by residues I431 to S433 and E484. Residues R515–C516 and W561 each bind 5-methyltetrahydropteroyltri-L-glutamate. D599 lines the L-homocysteine pocket. L-methionine is bound at residue D599. E605 is a 5-methyltetrahydropteroyltri-L-glutamate binding site. Zn(2+)-binding residues include H641, C643, and E665. H694 (proton donor) is an active-site residue. A Zn(2+)-binding site is contributed by C726.

The protein belongs to the vitamin-B12 independent methionine synthase family. It depends on Zn(2+) as a cofactor.

The enzyme catalyses 5-methyltetrahydropteroyltri-L-glutamate + L-homocysteine = tetrahydropteroyltri-L-glutamate + L-methionine. It participates in amino-acid biosynthesis; L-methionine biosynthesis via de novo pathway; L-methionine from L-homocysteine (MetE route): step 1/1. Functionally, catalyzes the transfer of a methyl group from 5-methyltetrahydrofolate to homocysteine resulting in methionine formation. In Shigella flexneri, this protein is 5-methyltetrahydropteroyltriglutamate--homocysteine methyltransferase.